The primary structure comprises 93 residues: Acylphosphatase (93 aa).

The Acylphosphatase-like domain maps to 7–93 (RLTAWVHGRV…ADAIAGFTER (87 aa)). Active-site residues include Arg22 and Asn40.

This sequence belongs to the acylphosphatase family.

It catalyses the reaction an acyl phosphate + H2O = a carboxylate + phosphate + H(+). The polypeptide is Acylphosphatase (acyP) (Mycolicibacterium vanbaalenii (strain DSM 7251 / JCM 13017 / BCRC 16820 / KCTC 9966 / NRRL B-24157 / PYR-1) (Mycobacterium vanbaalenii)).